Reading from the N-terminus, the 205-residue chain is MPVVFVAASKLPTPFAIFTMHGFLDEATGREHVVLSLGDIADGEPVLGRLHSECLTGDALFSQRCDCGSQLEAALQAIAREGRGVLLYLRQEGRGIGLLNKIRAYELQDGGADTVEANERLGFAADQRDYAMCLPMLEHLGVKSLRLMTNNPRKVKALTDMSIKVAERVPLHTGHNPHNRLYLATKADKLGHMMGNKHQGEVPQA.

49-53 is a binding site for GTP; that stretch reads RLHSE. Zn(2+)-binding residues include Cys54, Cys65, and Cys67. GTP contacts are provided by residues Gln70, 92-94, and Thr114; that span reads EGR. Residue Asp126 is the Proton acceptor of the active site. Arg128 serves as the catalytic Nucleophile. Thr149 and Lys154 together coordinate GTP.

The protein belongs to the GTP cyclohydrolase II family. Zn(2+) serves as cofactor.

It carries out the reaction GTP + 4 H2O = 2,5-diamino-6-hydroxy-4-(5-phosphoribosylamino)-pyrimidine + formate + 2 phosphate + 3 H(+). The protein operates within cofactor biosynthesis; riboflavin biosynthesis; 5-amino-6-(D-ribitylamino)uracil from GTP: step 1/4. In terms of biological role, catalyzes the conversion of GTP to 2,5-diamino-6-ribosylamino-4(3H)-pyrimidinone 5'-phosphate (DARP), formate and pyrophosphate. This is GTP cyclohydrolase-2 from Pseudomonas entomophila (strain L48).